Reading from the N-terminus, the 179-residue chain is UPF0167 protein PA1536 (179 aa).

It belongs to the UPF0167 family.

The sequence is that of UPF0167 protein PA1536 from Pseudomonas aeruginosa (strain ATCC 15692 / DSM 22644 / CIP 104116 / JCM 14847 / LMG 12228 / 1C / PRS 101 / PAO1).